A 303-amino-acid chain; its full sequence is Cyclin-dependent kinase B1-1 (303 aa).

The Protein kinase domain maps to Tyr4 to Phe295. ATP is bound by residues Val10–Val18 and Lys33. Thr14 is modified (phosphothreonine). The residue at position 15 (Tyr15) is a Phosphotyrosine. The active-site Proton acceptor is the Asp136. Thr170 bears the Phosphothreonine mark.

Belongs to the protein kinase superfamily. CMGC Ser/Thr protein kinase family. CDC2/CDKX subfamily. In terms of tissue distribution, expressed in actively dividing cells: root and shoot apical meristems, and young leaves.

It catalyses the reaction L-seryl-[protein] + ATP = O-phospho-L-seryl-[protein] + ADP + H(+). The catalysed reaction is L-threonyl-[protein] + ATP = O-phospho-L-threonyl-[protein] + ADP + H(+). The enzyme catalyses [DNA-directed RNA polymerase] + ATP = phospho-[DNA-directed RNA polymerase] + ADP + H(+). The protein is Cyclin-dependent kinase B1-1 (CDKB1-1) of Oryza sativa subsp. japonica (Rice).